The following is a 159-amino-acid chain: F1845 fimbrial protein (159 aa).

The signal sequence occupies residues 1 to 21 (MKKLAIMAAASMIFTVGSAQA).

This sequence belongs to the Dr-adhesin family.

It localises to the fimbrium. Functionally, hemagglutinins of uropathogenic E.coli mediate adherence to the upper urinary tract. These adhesins bind to the Dr blood group antigen and also agglutinate human erythrocytes in the presence of D-mannose (mannose-resistant hemagglutination (MRHA)). C1845 is a strain responsible for diarrheal disease. The polypeptide is F1845 fimbrial protein (daaE) (Escherichia coli).